A 334-amino-acid chain; its full sequence is Protein-methionine-sulfoxide reductase catalytic subunit MsrP (334 aa).

The segment at residues 1–44 (MKKNQFLKESDVTAESVFFMKRRQVLKALGISAAALSLPHAAHA) is a signal peptide (tat-type signal). Mo-molybdopterin is bound by residues Asn-88, 91-92 (YE), Cys-146, Thr-181, Asn-233, Arg-238, and 249-251 (GIK).

It belongs to the MsrP family. Heterodimer of a catalytic subunit (MsrP) and a heme-binding subunit (MsrQ). Requires Mo-molybdopterin as cofactor. In terms of processing, predicted to be exported by the Tat system. The position of the signal peptide cleavage has not been experimentally proven.

It localises to the periplasm. It carries out the reaction L-methionyl-[protein] + a quinone + H2O = L-methionyl-(S)-S-oxide-[protein] + a quinol. The enzyme catalyses L-methionyl-[protein] + a quinone + H2O = L-methionyl-(R)-S-oxide-[protein] + a quinol. Part of the MsrPQ system that repairs oxidized periplasmic proteins containing methionine sulfoxide residues (Met-O), using respiratory chain electrons. Thus protects these proteins from oxidative-stress damage caused by reactive species of oxygen and chlorine generated by the host defense mechanisms. MsrPQ is essential for the maintenance of envelope integrity under bleach stress, rescuing a wide series of structurally unrelated periplasmic proteins from methionine oxidation, including the primary periplasmic chaperone SurA and the lipoprotein Pal. The catalytic subunit MsrP is non-stereospecific, being able to reduce both (R-) and (S-) diastereoisomers of methionine sulfoxide. This is Protein-methionine-sulfoxide reductase catalytic subunit MsrP from Escherichia coli O9:H4 (strain HS).